The primary structure comprises 398 residues: Ornithine aminotransferase (398 aa).

Lysine 256 is subject to N6-(pyridoxal phosphate)lysine.

Belongs to the class-III pyridoxal-phosphate-dependent aminotransferase family. OAT subfamily. Pyridoxal 5'-phosphate is required as a cofactor.

Its subcellular location is the cytoplasm. It catalyses the reaction a 2-oxocarboxylate + L-ornithine = L-glutamate 5-semialdehyde + an L-alpha-amino acid. Its pathway is amino-acid biosynthesis; L-proline biosynthesis; L-glutamate 5-semialdehyde from L-ornithine: step 1/1. Its function is as follows. Catalyzes the interconversion of ornithine to glutamate semialdehyde. This chain is Ornithine aminotransferase, found in Oceanobacillus iheyensis (strain DSM 14371 / CIP 107618 / JCM 11309 / KCTC 3954 / HTE831).